We begin with the raw amino-acid sequence, 275 residues long: tRNA uridine(34) hydroxylase (275 aa).

Residues 121–214 form the Rhodanese domain; the sequence is SQPDVLVIDT…YLEKTYNKNG (94 aa). Catalysis depends on Cys-174, which acts as the Cysteine persulfide intermediate.

The protein belongs to the TrhO family.

It catalyses the reaction uridine(34) in tRNA + AH2 + O2 = 5-hydroxyuridine(34) in tRNA + A + H2O. Functionally, catalyzes oxygen-dependent 5-hydroxyuridine (ho5U) modification at position 34 in tRNAs. In Wolbachia pipientis wMel, this protein is tRNA uridine(34) hydroxylase.